The following is a 389-amino-acid chain: Alanine racemase (389 aa).

Lys48 acts as the Proton acceptor; specific for D-alanine in catalysis. Residue Lys48 is modified to N6-(pyridoxal phosphate)lysine. Residue Arg144 participates in substrate binding. Tyr281 (proton acceptor; specific for L-alanine) is an active-site residue. Residue Met329 coordinates substrate.

The protein belongs to the alanine racemase family. The cofactor is pyridoxal 5'-phosphate.

It carries out the reaction L-alanine = D-alanine. It participates in amino-acid biosynthesis; D-alanine biosynthesis; D-alanine from L-alanine: step 1/1. Its function is as follows. Catalyzes the interconversion of L-alanine and D-alanine. May also act on other amino acids. The sequence is that of Alanine racemase (alr) from Leptospira interrogans serogroup Icterohaemorrhagiae serovar Lai (strain 56601).